Here is a 114-residue protein sequence, read N- to C-terminus: Adapter SH3BGRL (114 aa).

The segment at 13–50 is required for interaction with HER2; sequence SMAIKKKQQDVLGFLEANKIGFEEKDIAANEENRKWMR. The required for interaction with PFN1, HER2, and ATG12 stretch occupies residues 54-71; the sequence is PENSRPATGYPLPPQIFN. The SH3-binding motif lies at 61–67; it reads TGYPLPP.

It belongs to the SH3BGR family. As to quaternary structure, monomer. Interacts with PFN1/Profilin-1. Interacts with ERBB2. Interacts with ATG12. Interacts with BECN1. Interacts with translating ribosomes.

The protein resides in the cytoplasm. It is found in the cytosol. The protein localises to the cell membrane. In terms of biological role, appears to function as an adapter protein that bridges proteins together or proteins with mRNAs. May function as a ubiquitin ligase-substrate adapter. Additionally, associates with translating cytoplasmic ribosomes and may promote the expression of specific mRNAs. The protein is Adapter SH3BGRL (SH3BGRL) of Bos taurus (Bovine).